The primary structure comprises 546 residues: Chaperonin GroEL (546 aa).

Residues 30–33 (TLGP), Lys-51, 87–91 (DGTTT), Gly-415, 479–481 (NAA), and Asp-495 contribute to the ATP site.

It belongs to the chaperonin (HSP60) family. As to quaternary structure, forms a cylinder of 14 subunits composed of two heptameric rings stacked back-to-back. Interacts with the co-chaperonin GroES.

Its subcellular location is the cytoplasm. The catalysed reaction is ATP + H2O + a folded polypeptide = ADP + phosphate + an unfolded polypeptide.. Together with its co-chaperonin GroES, plays an essential role in assisting protein folding. The GroEL-GroES system forms a nano-cage that allows encapsulation of the non-native substrate proteins and provides a physical environment optimized to promote and accelerate protein folding. The polypeptide is Chaperonin GroEL (Pseudomonas entomophila (strain L48)).